The following is a 242-amino-acid chain: ATP synthase subunit a (242 aa).

6 helical membrane-spanning segments follow: residues 29-49 (SAAYMLLASVLALTYFYLAFS), 84-104 (FVPVIFTLFVFILFCNLFGMI), 114-134 (IIITFALAILVFLMVTIVGFV), 140-160 (FLSLFLPHGTPLWLAPLMIII), 189-209 (VIASFVVTLMIYLKFLPIPLM), and 210-230 (VILIGFEIFVAILQAYIFTIL).

Belongs to the ATPase A chain family. In terms of assembly, F-type ATPases have 2 components, CF(1) - the catalytic core - and CF(0) - the membrane proton channel. CF(1) has five subunits: alpha(3), beta(3), gamma(1), delta(1), epsilon(1). CF(0) has three main subunits: a(1), b(2) and c(9-12). The alpha and beta chains form an alternating ring which encloses part of the gamma chain. CF(1) is attached to CF(0) by a central stalk formed by the gamma and epsilon chains, while a peripheral stalk is formed by the delta and b chains.

It is found in the cell inner membrane. In terms of biological role, key component of the proton channel; it plays a direct role in the translocation of protons across the membrane. This Rickettsia bellii (strain RML369-C) protein is ATP synthase subunit a.